A 582-amino-acid chain; its full sequence is MLLALLRQHIRPYRRLVAMLMMLQLVSTLASLYLPTVNAEIVDDGVAKGDTATIVRLGAVMLGVTGLQVLCAIGAVYLGSRTGAGFGRDLRSAMFEHIITFSERETARFGAPTLLTRSTNDVRQILFLVQMTATVLVTAPIMCVGGIIMAIHQEAALTWLLLVSVPILAVANYWIISHMLPLFRRMQSLIDGINRVMRDQLSGVRVVRAFTREGYERDKFAQANTALSNAALSAGNWQALMLPVTTLTINASSVALIWFGGLRIDSGQMQVGSLIAFLSYFAQILMAVLMATMTLAVLPRASVCAERITEVLSTPAALGNPDNPKFPTDGVTGVVRLAGATFTYPGADCPVLQDISLTARPGTTTAIVGSTGSGKSTLVSLICRLYDVTAGAVLVDGIDVREYHTERLWSAIGLVPQRSYLFSGTVADNLRYGGGPDQVVTEQEMWEALRVAAADGFVQTDGLQTRVAQGGVNFSGGQRQRLAIARAVIRRPAIYVFDDAFSALDVHTDAKVHASLRQVSGDATIIVVTQRISNAAQADQVIVVDNGKIVGTGTHETLLADCPTYAEFAASQSLSATVGGVG.

The next 6 helical transmembrane spans lie at 17–37 (VAML…LPTV), 57–77 (LGAV…GAVY), 131–151 (MTAT…IMAI), 156–176 (ALTW…YWII), 239–259 (ALML…LIWF), and 271–291 (VGSL…VLMA). The 284-residue stretch at 17–300 (VAMLMMLQLV…ATMTLAVLPR (284 aa)) folds into the ABC transmembrane type-1 domain. Residues 335–571 (VRLAGATFTY…CPTYAEFAAS (237 aa)) form the ABC transporter domain. 369 to 376 (GSTGSGKS) contributes to the ATP binding site.

The protein belongs to the ABC transporter superfamily.

It is found in the cell membrane. This is an uncharacterized protein from Mycobacterium tuberculosis (strain CDC 1551 / Oshkosh).